A 505-amino-acid polypeptide reads, in one-letter code: Monocarboxylate transporter 6 (505 aa).

The Cytoplasmic portion of the chain corresponds to 1–17 (MPQALERADGSWAWVVL). A helical membrane pass occupies residues 18 to 38 (LATMVTQGLTLGFPTCIGIFF). Residues 39–53 (TELQWEFQASNSETS) are Extracellular-facing. Residues 54–74 (WFPSILTAVLHMAGPLCSILV) form a helical membrane-spanning segment. The Cytoplasmic portion of the chain corresponds to 75-80 (GRFGCR). Residues 81-101 (VTVMLGGVLASLGMVASSFSH) traverse the membrane as a helical segment. Over 102–110 (NLSQLYFTA) the chain is Extracellular. The helical transmembrane segment at 111-131 (GFITGLGMCFSFQSSITVLGF) threads the bilayer. At 132–137 (YFVRRR) the chain is on the cytoplasmic side. A helical transmembrane segment spans residues 138–158 (VLANALASMGVSLGITLWPLL). Residues 159–171 (SRYLLENLGWRGT) are Extracellular-facing. A helical transmembrane segment spans residues 172-192 (FLVFGGIFLHCCICGAIIRPV). The Cytoplasmic segment spans residues 193–239 (ATSVAPETKECPPPPPETPALGCLAACGRTIQRHLAFDILRHNTGYC). A helical membrane pass occupies residues 240–260 (VYILGVMWSVLGFPLPQVFLV). Over 261–274 (PYAMWHSVDEQQAA) the chain is Extracellular. Residues 275 to 295 (LLISIIGFSNIFLRPLAGLMA) form a helical membrane-spanning segment. Topologically, residues 296–305 (GRPAFASHRK) are cytoplasmic. The chain crosses the membrane as a helical span at residues 306 to 326 (YLFSLALLLNGLTNLVCAASG). The Extracellular segment spans residues 327–329 (DFW). A helical transmembrane segment spans residues 330-350 (VLVGYCLAYSVSMSGIGALIF). The Cytoplasmic segment spans residues 351-367 (QVLMDIVPMDQFPRALG). The helical transmembrane segment at 368 to 388 (LFTVLDGLAFLISPPLAGLLL) threads the bilayer. Topologically, residues 389 to 396 (DATNNFSY) are extracellular. A helical transmembrane segment spans residues 397–417 (VFYMSSFFLISAALFMGGSFY). The Cytoplasmic segment spans residues 418-505 (ALQKKEQGKQ…QTALGWNSPT (88 aa)). The disordered stretch occupies residues 443 to 464 (KDGPGKQRSPEIMCQSSRQPRP).

Belongs to the major facilitator superfamily. Monocarboxylate porter (TC 2.A.1.13) family. In terms of tissue distribution, highly expressed in kidney.

The protein localises to the cell membrane. Proton-linked monocarboxylate transporter. Catalyzes the rapid transport across the plasma membrane of many monocarboxylates such as lactate, pyruvate, branched-chain oxo acids derived from leucine, valine and isoleucine, and the ketone bodies acetoacetate, beta-hydroxybutyrate and acetate. This is Monocarboxylate transporter 6 (SLC16A5) from Homo sapiens (Human).